A 130-amino-acid polypeptide reads, in one-letter code: Glycine cleavage system H protein (130 aa).

The Lipoyl-binding domain maps to 24–106 (GIKVGISAFA…YQEGWLLKIT (83 aa)). Lysine 65 bears the N6-lipoyllysine mark.

This sequence belongs to the GcvH family. In terms of assembly, the glycine cleavage system is composed of four proteins: P, T, L and H. Requires (R)-lipoate as cofactor.

Functionally, the glycine cleavage system catalyzes the degradation of glycine. The H protein shuttles the methylamine group of glycine from the P protein to the T protein. This chain is Glycine cleavage system H protein, found in Synechococcus sp. (strain RCC307).